The sequence spans 210 residues: Holliday junction resolvase RecU (210 aa).

Thr87, Asp89, Glu102, and Gln121 together coordinate Mg(2+).

The protein belongs to the RecU family. Mg(2+) serves as cofactor.

It is found in the cytoplasm. It carries out the reaction Endonucleolytic cleavage at a junction such as a reciprocal single-stranded crossover between two homologous DNA duplexes (Holliday junction).. Endonuclease that resolves Holliday junction intermediates in genetic recombination. Cleaves mobile four-strand junctions by introducing symmetrical nicks in paired strands. Promotes annealing of linear ssDNA with homologous dsDNA. Required for DNA repair, homologous recombination and chromosome segregation. The protein is Holliday junction resolvase RecU of Lactobacillus delbrueckii subsp. bulgaricus (strain ATCC 11842 / DSM 20081 / BCRC 10696 / JCM 1002 / NBRC 13953 / NCIMB 11778 / NCTC 12712 / WDCM 00102 / Lb 14).